A 363-amino-acid chain; its full sequence is Sorting nexin-21 (363 aa).

The span at 1 to 11 (MASRLLHRLRH) shows a compositional bias: basic residues. The tract at residues 1–99 (MASRLLHRLR…PPPDGQRSSQ (99 aa)) is disordered. Low complexity predominate over residues 12–28 (ALASDGPGEAAAGPEAE). The segment covering 46–56 (SRLSGTLSFTS) has biased composition (polar residues). Residues 57–71 (AEDDPDDEDEDDEAG) show a composition bias toward acidic residues. Residues 119–236 (QRLLFEVTSA…DFFVLPELRR (118 aa)) enclose the PX domain. Residues arginine 161, serine 163, lysine 188, and arginine 202 each coordinate a 1,2-diacyl-sn-glycero-3-phospho-(1D-myo-inositol-3-phosphate).

This sequence belongs to the sorting nexin family. As to quaternary structure, monomer.

Its subcellular location is the cytoplasmic vesicle membrane. The protein resides in the early endosome membrane. In terms of biological role, binds to membranes enriched in phosphatidylinositol 3-phosphate (PtdIns(P3)) and phosphatidylinositol 4,5-bisphosphate. May be involved in several stages of intracellular trafficking. The polypeptide is Sorting nexin-21 (Mus musculus (Mouse)).